A 444-amino-acid polypeptide reads, in one-letter code: Glutamate--tRNA ligase 1 (444 aa).

A 'HIGH' region motif is present at residues 10–20 (PSPTGRLHLGN). Positions 241 to 245 (GLSKR) match the 'KMSKS' region motif. Residue K244 coordinates ATP.

Belongs to the class-I aminoacyl-tRNA synthetase family. Glutamate--tRNA ligase type 1 subfamily. As to quaternary structure, monomer.

It is found in the cytoplasm. The enzyme catalyses tRNA(Glu) + L-glutamate + ATP = L-glutamyl-tRNA(Glu) + AMP + diphosphate. In terms of biological role, catalyzes the attachment of glutamate to tRNA(Glu) in a two-step reaction: glutamate is first activated by ATP to form Glu-AMP and then transferred to the acceptor end of tRNA(Glu). In Rhodospirillum rubrum (strain ATCC 11170 / ATH 1.1.1 / DSM 467 / LMG 4362 / NCIMB 8255 / S1), this protein is Glutamate--tRNA ligase 1.